Here is a 313-residue protein sequence, read N- to C-terminus: Competence protein ComGA (313 aa).

Residue 138-145 (GPVGSGKT) coordinates ATP.

Belongs to the GSP E family.

The protein resides in the cell membrane. Required for uptake of DNA by competent cells. May be involved in assembly of a complex forming a transformation pilus at the surface of competent cells. The chain is Competence protein ComGA from Streptococcus pneumoniae (strain ATCC BAA-255 / R6).